A 262-amino-acid chain; its full sequence is Small ribosomal subunit protein eS1z (262 aa).

Over residues 1-18 (MAVGKNKRISKGRKGGKK) the composition is skewed to basic residues. The tract at residues 1-21 (MAVGKNKRISKGRKGGKKKAV) is disordered.

This sequence belongs to the eukaryotic ribosomal protein eS1 family. As to quaternary structure, component of the small ribosomal subunit. Mature ribosomes consist of a small (40S) and a large (60S) subunit. The 40S subunit contains about 33 different proteins and 1 molecule of RNA (18S). The 60S subunit contains about 49 different proteins and 3 molecules of RNA (25S, 5.8S and 5S).

Its subcellular location is the cytoplasm. This chain is Small ribosomal subunit protein eS1z, found in Arabidopsis thaliana (Mouse-ear cress).